Here is a 671-residue protein sequence, read N- to C-terminus: NADH-quinone oxidoreductase subunit G (671 aa).

One can recognise a 2Fe-2S ferredoxin-type domain in the interval 1-78 (MIKLNIDGSE…GMVIHTDTPM (78 aa)). The [2Fe-2S] cluster site is built by C34, C45, C48, and C62. Residues 78–117 (MVKKAREGVMEFLLINHPLDCPICDQGGECDLQDQAFRYG) form the 4Fe-4S His(Cys)3-ligated-type domain. 8 residues coordinate [4Fe-4S] cluster: H94, C98, C101, C107, C146, C149, C152, and C196. Residues 215-271 (LKHTASIGVHDAEGSNIRIDSRGDEVMRILPRVNEEINEEWLSDKNRFSYDGLKYQR) form the 4Fe-4S Mo/W bis-MGD-type domain.

Belongs to the complex I 75 kDa subunit family. [2Fe-2S] cluster serves as cofactor. [4Fe-4S] cluster is required as a cofactor.

It catalyses the reaction a quinone + NADH + 5 H(+)(in) = a quinol + NAD(+) + 4 H(+)(out). NDH-1 shuttles electrons from NADH, via FMN and iron-sulfur (Fe-S) centers, to quinones in the respiratory chain. Couples the redox reaction to proton translocation (for every two electrons transferred, four hydrogen ions are translocated across the cytoplasmic membrane), and thus conserves the redox energy in a proton gradient. This chain is NADH-quinone oxidoreductase subunit G (nuoG), found in Rickettsia felis (strain ATCC VR-1525 / URRWXCal2) (Rickettsia azadi).